The chain runs to 101 residues: NADH-quinone oxidoreductase subunit K (101 aa).

Transmembrane regions (helical) follow at residues 4 to 24 (LEHYLTVAATLFVIGIFGLFL), 30 to 50 (IVLLMSIELMLLAVNINLVAF), and 65 to 85 (FVLTVAAAEAAIGLAILVCFF).

This sequence belongs to the complex I subunit 4L family. As to quaternary structure, NDH-1 is composed of 14 different subunits. Subunits NuoA, H, J, K, L, M, N constitute the membrane sector of the complex.

The protein resides in the cell inner membrane. The enzyme catalyses a quinone + NADH + 5 H(+)(in) = a quinol + NAD(+) + 4 H(+)(out). Its function is as follows. NDH-1 shuttles electrons from NADH, via FMN and iron-sulfur (Fe-S) centers, to quinones in the respiratory chain. The immediate electron acceptor for the enzyme in this species is believed to be ubiquinone. Couples the redox reaction to proton translocation (for every two electrons transferred, four hydrogen ions are translocated across the cytoplasmic membrane), and thus conserves the redox energy in a proton gradient. This Ruegeria pomeroyi (strain ATCC 700808 / DSM 15171 / DSS-3) (Silicibacter pomeroyi) protein is NADH-quinone oxidoreductase subunit K.